Here is a 536-residue protein sequence, read N- to C-terminus: Plasmepsin V (536 aa).

The signal sequence occupies residues 1–34 (MVGASLGPPGRGSLSRLIRLVICVLTLCALSVQG). The Lumenal portion of the chain corresponds to 35 to 492 (RSESTEGHSK…RKDNIFLKIP (458 aa)). One can recognise a Peptidase A1 domain in the interval 62-462 (YFLDIDIGTP…DIQKNRIGFV (401 aa)). Residue Asp80 is part of the active site. 7 disulfide bridges follow: Cys90-Cys172, Cys93-Cys96, Cys117-Cys128, Cys122-Cys133, Cys220-Cys466, Cys337-Cys382, and Cys391-Cys427. The span at 244–258 (SKSVSGQGSGPVSES) shows a compositional bias: low complexity. The interval 244 to 264 (SKSVSGQGSGPVSESLSESGE) is disordered. Asp313 is an active-site residue. The chain crosses the membrane as a helical span at residues 493–513 (FFYLYSLFVVFALSVLLSLVF). Residues 514–536 (YVRRLYHMEYSPLPSEGKAPADA) lie on the Cytoplasmic side of the membrane.

Belongs to the peptidase A1 family. As to quaternary structure, component of a complex composed of SPC25 and PMV; the interaction is mediated via the transmembrane domains. The complex interacts with the SEC61 channel-forming translocon complex and is involved in the recognition and import of PEXEL motif-containing proteins into the ER for subsequent export. It is not clear if the zymogen has a cleavable propeptide. Cleavage of the putative propeptide is dispensable for catalytic activity.

The protein localises to the endoplasmic reticulum membrane. Its activity is regulated as follows. Inhibited by peptidomimetic inhibitors such as WEHI-842. During the asexual blood stage, plays an essential role in the export of several proteins into the host erythrocytes by cleaving the pentameric localization motif RxLxE/Q/D (termed Plasmodium export element (PEXEL)) located downstream of the N-terminal secretory signal sequence. Specifically, cleaves after the leucine residue in the RxLxE/Q/D (or RxLxxE) motif of exported proteins including EMP1. Also, by regulating protein export, plays an essential role in gametocyte development and thus parasite transmission to the mosquito vector. In Plasmodium vivax (strain Salvador I), this protein is Plasmepsin V.